The chain runs to 247 residues: Probable transcriptional regulatory protein LBF_0056 (247 aa).

Belongs to the TACO1 family.

It is found in the cytoplasm. This Leptospira biflexa serovar Patoc (strain Patoc 1 / Ames) protein is Probable transcriptional regulatory protein LBF_0056.